Consider the following 252-residue polypeptide: UPF0273 protein MK0039 (252 aa).

The 245-residue stretch at 4 to 248 (ERVSTGIPGM…VFVKERGEVR (245 aa)) folds into the KaiC domain. ATP is bound at residue 31-38 (GGPGTGKT).

The protein belongs to the UPF0273 family.

The sequence is that of UPF0273 protein MK0039 from Methanopyrus kandleri (strain AV19 / DSM 6324 / JCM 9639 / NBRC 100938).